Consider the following 264-residue polypeptide: Phosphatidylglycerol--prolipoprotein diacylglyceryl transferase (264 aa).

7 helical membrane passes run V14–M34, L57–F77, I89–A109, F127–G147, Q176–A196, K202–F222, and L235–L255. R140 is a binding site for a 1,2-diacyl-sn-glycero-3-phospho-(1'-sn-glycerol).

It belongs to the Lgt family.

Its subcellular location is the cell inner membrane. It catalyses the reaction L-cysteinyl-[prolipoprotein] + a 1,2-diacyl-sn-glycero-3-phospho-(1'-sn-glycerol) = an S-1,2-diacyl-sn-glyceryl-L-cysteinyl-[prolipoprotein] + sn-glycerol 1-phosphate + H(+). Its pathway is protein modification; lipoprotein biosynthesis (diacylglyceryl transfer). Functionally, catalyzes the transfer of the diacylglyceryl group from phosphatidylglycerol to the sulfhydryl group of the N-terminal cysteine of a prolipoprotein, the first step in the formation of mature lipoproteins. This is Phosphatidylglycerol--prolipoprotein diacylglyceryl transferase from Aromatoleum aromaticum (strain DSM 19018 / LMG 30748 / EbN1) (Azoarcus sp. (strain EbN1)).